We begin with the raw amino-acid sequence, 291 residues long: ATP synthase gamma chain (291 aa).

Belongs to the ATPase gamma chain family. In terms of assembly, F-type ATPases have 2 components, CF(1) - the catalytic core - and CF(0) - the membrane proton channel. CF(1) has five subunits: alpha(3), beta(3), gamma(1), delta(1), epsilon(1). CF(0) has three main subunits: a, b and c.

The protein localises to the cell inner membrane. Functionally, produces ATP from ADP in the presence of a proton gradient across the membrane. The gamma chain is believed to be important in regulating ATPase activity and the flow of protons through the CF(0) complex. The chain is ATP synthase gamma chain from Rhodopseudomonas palustris (strain BisB5).